The following is a 168-amino-acid chain: ATP synthase subunit b, chloroplastic (168 aa).

The helical transmembrane segment at 20 to 37 threads the bilayer; it reads LNLAVVLPIVFTLGRDTL.

It belongs to the ATPase B chain family. As to quaternary structure, F-type ATPases have 2 components, F(1) - the catalytic core - and F(0) - the membrane proton channel. F(1) has five subunits: alpha(3), beta(3), gamma(1), delta(1), epsilon(1). F(0) has four main subunits: a(1), b(1), b'(1) and c(10-14). The alpha and beta chains form an alternating ring which encloses part of the gamma chain. F(1) is attached to F(0) by a central stalk formed by the gamma and epsilon chains, while a peripheral stalk is formed by the delta, b and b' chains.

Its subcellular location is the plastid. The protein resides in the chloroplast thylakoid membrane. In terms of biological role, f(1)F(0) ATP synthase produces ATP from ADP in the presence of a proton or sodium gradient. F-type ATPases consist of two structural domains, F(1) containing the extramembraneous catalytic core and F(0) containing the membrane proton channel, linked together by a central stalk and a peripheral stalk. During catalysis, ATP synthesis in the catalytic domain of F(1) is coupled via a rotary mechanism of the central stalk subunits to proton translocation. Functionally, component of the F(0) channel, it forms part of the peripheral stalk, linking F(1) to F(0). This Ostreococcus tauri protein is ATP synthase subunit b, chloroplastic.